The primary structure comprises 145 residues: Endoribonuclease YbeY (145 aa).

Residues H109, H113, and H119 each coordinate Zn(2+).

Belongs to the endoribonuclease YbeY family. Zn(2+) serves as cofactor.

It is found in the cytoplasm. Functionally, single strand-specific metallo-endoribonuclease involved in late-stage 70S ribosome quality control and in maturation of the 3' terminus of the 16S rRNA. The chain is Endoribonuclease YbeY from Ruthia magnifica subsp. Calyptogena magnifica.